The chain runs to 297 residues: Golgi-associated RAB2 interactor protein 1A (297 aa).

The interval 226–257 (SNRHQTSRDRHTDTATETDNSGNCKSTPLVAS) is disordered. A compositionally biased stretch (polar residues) spans 240–257 (ATETDNSGNCKSTPLVAS).

Belongs to the GARIN family. Interacts (via N-terminus) with RAB2B (in GTP-bound form). In terms of tissue distribution, expressed in testis (at protein level).

The protein localises to the golgi apparatus. In terms of biological role, RAB2B effector protein required for accurate acrosome formation and normal male fertility. The protein is Golgi-associated RAB2 interactor protein 1A of Mus musculus (Mouse).